Reading from the N-terminus, the 341-residue chain is C2 calcium-dependent domain-containing protein 4D (341 aa).

The span at 56-71 (RLRDPRGAEGRVDRNP) shows a compositional bias: basic and acidic residues. Disordered stretches follow at residues 56 to 75 (RLRD…GGRN) and 134 to 176 (CRAP…PYAP). The segment covering 139–149 (SDTASSPDSSP) has biased composition (low complexity). A C2 domain is found at 205–331 (RGGQLRLSTE…PPLAGGLGPG (127 aa)).

The sequence is that of C2 calcium-dependent domain-containing protein 4D (C2cd4d) from Mus musculus (Mouse).